The primary structure comprises 503 residues: Zinc finger protein JACKDAW (503 aa).

A compositionally biased stretch (low complexity) spans 32 to 51 (IPDLNPNSNPNPNAKPNSSS). The interval 32–68 (IPDLNPNSNPNPNAKPNSSSAKKKRNQPGTPDPDADV) is disordered. Phosphoserine is present on Ser72. C2H2-type zinc fingers lie at residues 82 to 104 (FVCE…RRGH) and 124 to 154 (YICP…SRKH). 2 short sequence motifs (nuclear localization signal) span residues 100–107 (HRRGHNLP) and 146–153 (IKKHYSRK). A C2H2-type 2; degenerate zinc finger spans residues 159–182 (WKCEKCSKKYAVQSDWKAHAKTCG). Zn(2+) contacts are provided by Cys161, Cys164, His177, Cys181, Cys188, Cys190, His203, and Cys207. The CCHC-type 2; atypical zinc-finger motif lies at 186–209 (YKCDCGTLFSRKDSFITHRAFCDA). Positions 196–208 (RKDSFITHRAFCD) are SHR-binding. 2 disordered regions span residues 301–417 (SSSS…SSPM) and 432–465 (RENH…LNPA). Residues 319–358 (TSTNPSLTLSSSSTSQQTSASLQHQTLKDSSFSPLFSSSS) show a composition bias toward low complexity. The span at 381–392 (MGSTRSNSSTAP) shows a compositional bias: polar residues. A compositionally biased stretch (low complexity) spans 396 to 407 (AGPTMTSSSATA). Over residues 444–465 (GVSTSSVDNNPFQSNRSGLNPA) the composition is skewed to polar residues.

As to quaternary structure, interacts with SHR, SCR, MGP and itself. The heterodimer with SHR involves its zinc fingers. Interacts with SIEL. Binds to RGA and SCL3 competitively in the nucleus. Expressed in the quiescent center, the ground tissue stem cells and to a lesser extent in mature cortex and endodermis cells.

The protein resides in the nucleus. Transcription factor that, together with BIB, regulates tissue boundaries and asymmetric cell division by a rapid up-regulation of 'SCARECROW' (SCR), thus controlling the nuclear localization of 'SHORT-ROOT' (SHR) and restricting its action. Binds DNA via its zinc fingers. Recognizes and binds to SCL3 promoter sequence 5'-AGACAA-3' to promote its expression when in complex with RGA. Confines CYCD6 expression to the cortex-endodermis initial/daughter (CEI/CEID) tissues. Required for radial patterning and stem cell maintenance. Counteracted by 'MAGPIE' (MGP). Binds to the SCR and MGP promoter sequences. Controls position-dependent signals that regulate epidermal-cell-type patterning. The chain is Zinc finger protein JACKDAW from Arabidopsis thaliana (Mouse-ear cress).